A 164-amino-acid chain; its full sequence is FMN reductase (NADH) RutF (164 aa).

Belongs to the non-flavoprotein flavin reductase family. RutF subfamily.

The catalysed reaction is FMNH2 + NAD(+) = FMN + NADH + 2 H(+). In terms of biological role, catalyzes the reduction of FMN to FMNH2 which is used to reduce pyrimidine by RutA via the Rut pathway. The protein is FMN reductase (NADH) RutF of Enterobacter sp. (strain 638).